A 215-amino-acid polypeptide reads, in one-letter code: Histidine biosynthesis bifunctional protein HisIE (215 aa).

The phosphoribosyl-AMP cyclohydrolase stretch occupies residues 1-118; the sequence is MTKSISIEHL…YKNDVALLQI (118 aa). A phosphoribosyl-ATP pyrophosphohydrolase region spans residues 119–215; that stretch reads IPQVSAKIKE…HVEKEGQQRE (97 aa).

This sequence in the N-terminal section; belongs to the PRA-CH family. It in the C-terminal section; belongs to the PRA-PH family.

It is found in the cytoplasm. It catalyses the reaction 1-(5-phospho-beta-D-ribosyl)-ATP + H2O = 1-(5-phospho-beta-D-ribosyl)-5'-AMP + diphosphate + H(+). The enzyme catalyses 1-(5-phospho-beta-D-ribosyl)-5'-AMP + H2O = 1-(5-phospho-beta-D-ribosyl)-5-[(5-phospho-beta-D-ribosylamino)methylideneamino]imidazole-4-carboxamide. It participates in amino-acid biosynthesis; L-histidine biosynthesis; L-histidine from 5-phospho-alpha-D-ribose 1-diphosphate: step 2/9. Its pathway is amino-acid biosynthesis; L-histidine biosynthesis; L-histidine from 5-phospho-alpha-D-ribose 1-diphosphate: step 3/9. This is Histidine biosynthesis bifunctional protein HisIE from Oceanobacillus iheyensis (strain DSM 14371 / CIP 107618 / JCM 11309 / KCTC 3954 / HTE831).